The sequence spans 146 residues: Inner membrane protein YdgK (146 aa).

Residues 1–12 (MTTTTPQRIGGW) are Cytoplasmic-facing. The chain crosses the membrane as a helical span at residues 13–33 (LLGPLAWLLVALLSTTLALLL). Residues 34–59 (YTAALSSPQTFQTLGGQALTTQILWG) are Periplasmic-facing. The helical transmembrane segment at 60–80 (VSFITAIALWYYTLWLTIAFF) threads the bilayer. Residues 81-89 (KRRRCVPKH) are Cytoplasmic-facing. A helical membrane pass occupies residues 90 to 110 (YIIWLLISVLLAVKAFAFSPV). Over 111–112 (ED) the chain is Periplasmic. The helical transmembrane segment at 113–133 (GIAVRQLLFTLLATALIVPYF) threads the bilayer. The Cytoplasmic portion of the chain corresponds to 134 to 146 (KRSSRVKATFVNP).

The protein to Synechocystis PCC 6803 sll0481.

The protein resides in the cell inner membrane. In Escherichia coli (strain K12), this protein is Inner membrane protein YdgK (ydgK).